A 355-amino-acid polypeptide reads, in one-letter code: 3-dehydroquinate synthase (355 aa).

Residues 66 to 71 (SGETTK), 100 to 104 (GATGD), 124 to 125 (TT), K136, K145, and 163 to 166 (FLET) contribute to the NAD(+) site. Residues E178, H242, and H256 each coordinate Zn(2+).

It belongs to the sugar phosphate cyclases superfamily. Dehydroquinate synthase family. Requires Co(2+) as cofactor. It depends on Zn(2+) as a cofactor. The cofactor is NAD(+).

The protein resides in the cytoplasm. It catalyses the reaction 7-phospho-2-dehydro-3-deoxy-D-arabino-heptonate = 3-dehydroquinate + phosphate. It functions in the pathway metabolic intermediate biosynthesis; chorismate biosynthesis; chorismate from D-erythrose 4-phosphate and phosphoenolpyruvate: step 2/7. Its function is as follows. Catalyzes the conversion of 3-deoxy-D-arabino-heptulosonate 7-phosphate (DAHP) to dehydroquinate (DHQ). The polypeptide is 3-dehydroquinate synthase (Staphylococcus saprophyticus subsp. saprophyticus (strain ATCC 15305 / DSM 20229 / NCIMB 8711 / NCTC 7292 / S-41)).